We begin with the raw amino-acid sequence, 885 residues long: MQERYSPTAVEAAAQQDWQARDAYRVTEHARNADGTEKPKFYACSMLPYPSGKLHMGHVRNYTINDMMARQLRMRGYNVLMPMGWDAFGMPAENAAIKSKVPPAKWTYDNIAYMKKQMQAMGLAIDWSREMCACDPEYYKWNQWLFLKMLEKGIAYRKTQVVNWDPVDQTVLANEQVIDGRGWRSGALVEKREIPGYYLRITDYADELLDQVRSGLPGWPERVRAMQENWIGKSEGVRFAFPHTIAGADGQLIQDGRLYVFTTRADTIMGVTFCAVAPEHPLATHAAATNPELASFIEQCKLGGTTEAEIATREKAGMRTGLTVTHPLTGAPVDVWVGNYVLMSYGDGAVMGVPAHDERDFAFAKKYQLPIRQVVAHEGKAYSTDAWQEWYGDKQGGRTVNSGKYDGLPYAEAVDAIAADLAAQGLGEKQTTWRLRDWGISRQRYWGTPIPIIHCADCGPVPVPEQDLPVVLPDDLIPDGSGNPLAKNEAFLSCSCPRCGKPARRETDTMDTFVDSSWYFMRYTSPGNDQAMVDARNDYWMPMDQYIGGIEHAVLHLLYARFWTRVMRDLGLLKFDEPFTKLLCQGMVLNHIYSRKNAQGGIEYFWPEEVENLYDAKGAITGARLKSDGSDVNYGGVGTMSKSKNNGVDPQALIDTLGADTARLFVMFASPPEQTLEWSDSGVEGANRFLRRLWSHCHAHRDAVARGLAAGADWAQAPAPVKDLRREVYGLLKQADYDYQRIQYNTVVSACMKMLNAIDDAKLPEGAHADAARAETLGVLLRVLYPVVPHVTWLLWRELGYTHSLGDLLDAPWPHVDEAALVADEIELMLQVNGKLRGAIRVAAKASKADIEQIAAAQEEVARFLEGRPPKRVIVVPGKLVNVVG.

The 'HIGH' region signature appears at 48–58; the sequence is PYPSGKLHMGH. The 'KMSKS' region motif lies at 639–643; sequence TMSKS. K642 lines the ATP pocket.

This sequence belongs to the class-I aminoacyl-tRNA synthetase family.

It localises to the cytoplasm. It catalyses the reaction tRNA(Leu) + L-leucine + ATP = L-leucyl-tRNA(Leu) + AMP + diphosphate. This chain is Leucine--tRNA ligase, found in Bordetella petrii (strain ATCC BAA-461 / DSM 12804 / CCUG 43448).